Reading from the N-terminus, the 1128-residue chain is MSRSVLQPSQQKLAEKLTILNDRGVGMLTRLYNIKKACGDPKAKPSYLIDKNLESAVKFIVRKFPAVETRNNNQQLAQLQKEKSEILKNLALYYFTFVDVMEFKDHVCELLNTIDVCQVFLDITVNFDLTKNYLDLIVTYTTLMIMLSRIEERKAIIGLYNYSHEMTHGASDREYPRLGQMIVDYENPLKKMMEEFVPHSKSLSDALISLQMVYPRRNLSAEQWRNAQLLSLISAPSTMLNPAQSDTMPCEYLSLDTMEKWIILGFILCHGILNTDATSLNLWKLALQSSSCICLYRDEVLHFHKAAEDLFVNIRGYNKRINDIRECKENAVSHAGATHRERRKFLRSALKELATVLSDQPGLLGPKALFVFMALSFARDEIIWLLRHADNIPKKIADDFMDKHIAELIFYMEELRAHVRKYGPVMQRYYVQYLSGFDAVVLNELVQNLSVCPEDESIIMSSFVNTMTSLSVKQVEDGEVFDFRGMRLDWFRLQAYTSVSKASLSLTDHRELGKMMNTIIFHTKMVDSLVEMLVETSDLSIFCFYSRAFEKMFQQCLELPSQSRYSISFPLLCTHFMSCTHELCPEERHHIGDRSLSLCNMFLDEMAKQARNLITDICTEQCTLSDQLLPKHCAKTISQAVNKKSKKQTGKKGEPEREKPGVESMRKNRLVVTNLDKLHTALSELCFSINYAPNMVVWEHTFTPREYLTSHLEIRFTKSIVGMTMYNQVTQEIAKPSELLTSVRAYMTVLQSIENYVQIDITRVFNNVLLQQTQHLDSHGEPTITSLYTNWYLETLLRQVSNGHIAYFPAMKAFVNLPTENELTFNAEEYSDISEMRALSELLGPYGMKFLSESLMWHISSQVAELKKLVVENVEVLTQMRTSFDKPEQMAAFFKRLTSVDSVLKRMTIIGVILSFRSLAQEALKDVLSYHIPFLVSSVEDFKDHIPRETDMKVAMNVYELSSAAGLPCEIDPALVVALSSQKSETISPEEEYKIACLLMVFVAVSLPTLASNVMSQYSPAIEGHCNNIHCLAKAINQIAAALFTIHKGSIEDRLKEFLALASSSLLKIGQETDKTTTRNRESVYLLLDMIVQESPFLTMDLLESCFPYVLLRNAYHAVYKQSVTSSS.

The interval 640 to 665 (AVNKKSKKQTGKKGEPEREKPGVESM) is disordered. The segment covering 651–665 (KKGEPEREKPGVESM) has biased composition (basic and acidic residues). Residues 995-1015 (IACLLMVFVAVSLPTLASNVM) form a helical membrane-spanning segment.

It belongs to the HEM-1/HEM-2 family.

The protein resides in the cell membrane. It localises to the cell projection. Its subcellular location is the lamellipodium membrane. In terms of biological role, part of the WAVE complex that regulates lamellipodia formation. The WAVE complex regulates actin filament reorganization via its interaction with the Arp2/3 complex. Actin remodeling activity is regulated by RAC1. Plays a role in neural tube closure. The polypeptide is Nck-associated protein 1 (nckap1) (Xenopus laevis (African clawed frog)).